Reading from the N-terminus, the 468-residue chain is Interleukin-6 receptor subunit alpha (468 aa).

Residues 1–19 (MLAVGCALLAALLAAPGAA) form the signal peptide. The Extracellular segment spans residues 20–365 (LAPRRCPAQE…VQDSSSVPLP (346 aa)). 4 cysteine pairs are disulfide-bonded: Cys25/Cys193, Cys47/Cys96, Cys121/Cys132, and Cys165/Cys176. The region spanning 26-112 (PAQEVARGVL…AGTVHLLVDV (87 aa)) is the Ig-like C2-type domain. 2 N-linked (GlcNAc...) asparagine glycosylation sites follow: Asn55 and Asn93. 2 consecutive Fibronectin type-III domains span residues 113–217 (PPEE…LQPD) and 218–316 (PPAN…TPWT). 2 N-linked (GlcNAc...) asparagine glycosylation sites follow: Asn221 and Asn245. A WSXWS motif motif is present at residues 303–307 (WSEWS). A disordered region spans residues 303 to 328 (WSEWSPEAMGTPWTESRSPPAENEVS). N-linked (GlcNAc...) asparagine glycosylation is present at Asn350. Thr352 is a glycosylation site (O-linked (GlcNAc) threonine). Residues 366–386 (TFLVAGGSLAFGTLLCIAIVL) traverse the membrane as a helical segment. The Cytoplasmic segment spans residues 387-468 (RFKKTWKLRA…ISNTDYFFPR (82 aa)). Over residues 421 to 433 (TPVLVPLISPPVS) the composition is skewed to pro residues. Positions 421–468 (TPVLVPLISPPVSPSSLGSDNTSSHNRPDARDPRSPYDISNTDYFFPR) are disordered. Residues 446-455 (NRPDARDPRS) are compositionally biased toward basic and acidic residues. Positions 458–468 (DISNTDYFFPR) are enriched in polar residues.

The protein belongs to the type I cytokine receptor family. Type 3 subfamily. As to quaternary structure, component of a hexamer of two molecules each of IL6, IL6R and IL6ST; first binds to IL6 to associate with the signaling subunit IL6ST. Interacts (via N-terminal ectodomain) with SORL1; this interaction may affect IL6-binding to IL6R, hence decrease IL6 'classic-signaling'. Also interacts with SORL1; this interaction leads to soluble IL6R internalization. May form a trimeric complex with the soluble SORL1 ectodomain and circulating IL6 receptor; this interaction might stabilize circulating IL6, hence promote IL6 'trans-signaling,. Post-translationally, a short soluble form is released from the membrane by proteolysis. The sIL6R is formed mostly by limited proteolysis of membrane-bound receptors, a process referred to as ectodomain shedding, but is also directly secreted from the cells after alternative mRNA splicing. mIL6R is cleaved by the proteases ADAM10 and ADAM17. Glycosylated. Glycosylation is dispensable for transport, signaling, and cell-surface turnover. Glycosylation at Asn-55 is a protease-regulatory exosite. Glycosylation is required for ADAM17-mediated proteolysis. As to expression, expressed in peripheral blood mononuclear cells and weakly found in urine and serum. 1%-20% of the total sIL6R in plasma is generated by alternative splicing.

It localises to the cell membrane. The protein localises to the secreted. Classic and trans-signaling are both inhibited by tocilizumab, a humanized monoclonal antibody that blocks interleukin IL6R signaling. Its function is as follows. Part of the receptor for interleukin 6. Binds to IL6 with low affinity, but does not transduce a signal. Signal activation necessitate an association with IL6ST. Activation leads to the regulation of the immune response, acute-phase reactions and hematopoiesis. The interaction with membrane-bound IL6R and IL6ST stimulates 'classic signaling', the restricted expression of the IL6R limits classic IL6 signaling to only a few tissues such as the liver and some cells of the immune system. Whereas the binding of IL6 and soluble IL6R to IL6ST stimulates 'trans-signaling'. Alternatively, 'cluster signaling' occurs when membrane-bound IL6:IL6R complexes on transmitter cells activate IL6ST receptors on neighboring receiver cells. In terms of biological role, signaling via the membrane-bound IL6R is mostly regenerative and anti-inflammatory. Drives naive CD4(+) T cells to the Th17 lineage, through 'cluster signaling' by dendritic cells. Soluble form of IL6 receptor (sIL6R) that acts as an agonist of IL6 activity. The IL6:sIL6R complex (hyper-IL6) binds to IL6ST/gp130 on cell surfaces and induces signaling also on cells that do not express membrane-bound IL6R in a process called IL6 'trans-signaling'. sIL6R is causative for the pro-inflammatory properties of IL6 and an important player in the development of chronic inflammatory diseases. In complex with IL6, is required for induction of VEGF production. Plays a protective role during liver injury, being required for maintenance of tissue regeneration. 'Trans-signaling' in central nervous system regulates energy and glucose homeostasis. The polypeptide is Interleukin-6 receptor subunit alpha (Homo sapiens (Human)).